A 298-amino-acid chain; its full sequence is Lipoyl synthase 1 (298 aa).

Cysteine 34, cysteine 39, cysteine 45, cysteine 60, cysteine 64, cysteine 67, and serine 274 together coordinate [4Fe-4S] cluster. Residues 46 to 263 (FYQGTATFLM…RRLGESMGFL (218 aa)) form the Radical SAM core domain.

It belongs to the radical SAM superfamily. Lipoyl synthase family. [4Fe-4S] cluster is required as a cofactor.

The protein localises to the cytoplasm. The catalysed reaction is [[Fe-S] cluster scaffold protein carrying a second [4Fe-4S](2+) cluster] + N(6)-octanoyl-L-lysyl-[protein] + 2 oxidized [2Fe-2S]-[ferredoxin] + 2 S-adenosyl-L-methionine + 4 H(+) = [[Fe-S] cluster scaffold protein] + N(6)-[(R)-dihydrolipoyl]-L-lysyl-[protein] + 4 Fe(3+) + 2 hydrogen sulfide + 2 5'-deoxyadenosine + 2 L-methionine + 2 reduced [2Fe-2S]-[ferredoxin]. Its pathway is protein modification; protein lipoylation via endogenous pathway; protein N(6)-(lipoyl)lysine from octanoyl-[acyl-carrier-protein]: step 2/2. Catalyzes the radical-mediated insertion of two sulfur atoms into the C-6 and C-8 positions of the octanoyl moiety bound to the lipoyl domains of lipoate-dependent enzymes, thereby converting the octanoylated domains into lipoylated derivatives. The protein is Lipoyl synthase 1 of Thermosynechococcus vestitus (strain NIES-2133 / IAM M-273 / BP-1).